The sequence spans 206 residues: Large ribosomal subunit protein uL4 (206 aa).

The interval 43-78 (ARSGNRKQKDREEVHHTTKKPWRQKGTGRARAGMSS) is disordered. Residues 49–58 (KQKDREEVHH) show a composition bias toward basic and acidic residues. Positions 59–70 (TTKKPWRQKGTG) are enriched in basic residues.

This sequence belongs to the universal ribosomal protein uL4 family. As to quaternary structure, part of the 50S ribosomal subunit.

Functionally, one of the primary rRNA binding proteins, this protein initially binds near the 5'-end of the 23S rRNA. It is important during the early stages of 50S assembly. It makes multiple contacts with different domains of the 23S rRNA in the assembled 50S subunit and ribosome. In terms of biological role, forms part of the polypeptide exit tunnel. In Herminiimonas arsenicoxydans, this protein is Large ribosomal subunit protein uL4.